The chain runs to 177 residues: 2-C-methyl-D-erythritol 2,4-cyclodiphosphate synthase (177 aa).

The a divalent metal cation site is built by Asp23 and His25. 4-CDP-2-C-methyl-D-erythritol 2-phosphate-binding positions include 23 to 25 (DVH) and 49 to 50 (HS). His57 lines the a divalent metal cation pocket. Residues 71 to 73 (DIG), 76 to 80 (FSDTD), 115 to 121 (AQAPRMA), and Arg157 contribute to the 4-CDP-2-C-methyl-D-erythritol 2-phosphate site.

Belongs to the IspF family. As to quaternary structure, homotrimer. Requires a divalent metal cation as cofactor.

The catalysed reaction is 4-CDP-2-C-methyl-D-erythritol 2-phosphate = 2-C-methyl-D-erythritol 2,4-cyclic diphosphate + CMP. It functions in the pathway isoprenoid biosynthesis; isopentenyl diphosphate biosynthesis via DXP pathway; isopentenyl diphosphate from 1-deoxy-D-xylulose 5-phosphate: step 4/6. In terms of biological role, involved in the biosynthesis of isopentenyl diphosphate (IPP) and dimethylallyl diphosphate (DMAPP), two major building blocks of isoprenoid compounds. Catalyzes the conversion of 4-diphosphocytidyl-2-C-methyl-D-erythritol 2-phosphate (CDP-ME2P) to 2-C-methyl-D-erythritol 2,4-cyclodiphosphate (ME-CPP) with a corresponding release of cytidine 5-monophosphate (CMP). The polypeptide is 2-C-methyl-D-erythritol 2,4-cyclodiphosphate synthase (Nitrosospira multiformis (strain ATCC 25196 / NCIMB 11849 / C 71)).